A 314-amino-acid chain; its full sequence is Ribosomal RNA small subunit methyltransferase H (314 aa).

S-adenosyl-L-methionine-binding positions include G36–H38, D56, F80, D102, and Q109. A disordered region spans residues G278 to R300. The segment covering K289–R300 has biased composition (basic and acidic residues).

Belongs to the methyltransferase superfamily. RsmH family.

The protein localises to the cytoplasm. The enzyme catalyses cytidine(1402) in 16S rRNA + S-adenosyl-L-methionine = N(4)-methylcytidine(1402) in 16S rRNA + S-adenosyl-L-homocysteine + H(+). In terms of biological role, specifically methylates the N4 position of cytidine in position 1402 (C1402) of 16S rRNA. In Photorhabdus laumondii subsp. laumondii (strain DSM 15139 / CIP 105565 / TT01) (Photorhabdus luminescens subsp. laumondii), this protein is Ribosomal RNA small subunit methyltransferase H.